We begin with the raw amino-acid sequence, 769 residues long: Integrin beta-2 (769 aa).

An N-terminal signal peptide occupies residues 1–22 (MLRQRPQLLLLAGLLALQSVLS). Gln23 is subject to Pyrrolidone carboxylic acid. The Extracellular portion of the chain corresponds to 23–700 (QECTNYKVST…DMLECVKGPN (678 aa)). The PSI domain maps to 24–74 (ECTNYKVSTCRDCIESGPGCAWCQKLNFTGQGEPDSIRCDTRAELLSKGCP). Intrachain disulfides connect Cys25-Cys43, Cys33-Cys447, Cys36-Cys62, Cys46-Cys73, Cys191-Cys198, Cys246-Cys286, Cys386-Cys400, Cys420-Cys445, Cys449-Cys467, Cys459-Cys470, Cys472-Cys481, Cys483-Cys514, Cys497-Cys512, Cys506-Cys517, Cys519-Cys534, Cys536-Cys559, Cys541-Cys557, Cys549-Cys562, Cys564-Cys573, Cys575-Cys598, Cys582-Cys596, Cys590-Cys601, Cys603-Cys612, Cys615-Cys618, Cys622-Cys662, Cys628-Cys647, Cys631-Cys643, and Cys670-Cys695. Asn50 and Asn116 each carry an N-linked (GlcNAc...) asparagine glycan. Residues 124–363 (GYPIDLYYLM…ELIKNAYNKL (240 aa)) enclose the VWFA domain. Mg(2+)-binding residues include Ser136 and Ser138. Ca(2+) contacts are provided by Ser138, Asp141, Asp142, and Asp173. Asn229, Asp231, Pro233, and Glu234 together coordinate Ca(2+). Glu234 contributes to the Mg(2+) binding site. N-linked (GlcNAc...) asparagine glycosylation occurs at Asn254. The Ca(2+) site is built by Asp264 and Glu347. The short motif at 397-399 (RGD) is the Cell attachment site element. I-EGF domains are found at residues 449 to 482 (CRDA…KNCE), 483 to 535 (CQTQ…QFCE), 536 to 574 (CDNV…SACQ), and 575 to 613 (CLKS…PLCS). Residue Asn501 is glycosylated (N-linked (GlcNAc...) asparagine). An N-linked (GlcNAc...) asparagine glycan is attached at Asn642. The chain crosses the membrane as a helical span at residues 701–723 (IAAIVGGTVGGVVLVGILLLVIW). At 724–769 (KALTHLSDLREYHRFEKEKLKSQWNNDNPLFKSATTTVMNPKFAES) the chain is on the cytoplasmic side. Phosphoserine occurs at positions 745 and 756. 2 positions are modified to phosphothreonine: Thr758 and Thr760.

This sequence belongs to the integrin beta chain family. In terms of assembly, heterodimer of an alpha and a beta subunit. The ITGB2 beta subunit associates with the ITGAL, ITGAM, ITGAX or ITGAD alpha subunits. Found in a complex with CD177 and ITGAM/CD11b. Interacts with FGR. Interacts with COPS5 and RANBP9. Interacts with FLNA (via filamin repeats 4, 9, 12, 17, 19, 21, and 23). Interacts with THBD. Both Ser-745 and Ser-756 become phosphorylated when T-cells are exposed to phorbol esters. Phosphorylation on Thr-758 (but not on Ser-756) allows interaction with 14-3-3 proteins.

It is found in the cell membrane. The protein resides in the membrane raft. In terms of biological role, integrin ITGAL/ITGB2 is a receptor for ICAM1, ICAM2, ICAM3 and ICAM4. Integrin ITGAL/ITGB2 is also a receptor for the secreted form of ubiquitin-like protein ISG15; the interaction is mediated by ITGAL. Integrins ITGAM/ITGB2 and ITGAX/ITGB2 are receptors for the iC3b fragment of the third complement component and for fibrinogen. Integrin ITGAX/ITGB2 recognizes the sequence G-P-R in fibrinogen alpha-chain. Integrin ITGAM/ITGB2 recognizes P1 and P2 peptides of fibrinogen gamma chain. Integrin ITGAM/ITGB2 is also a receptor for factor X. Integrin ITGAD/ITGB2 is a receptor for ICAM3 and VCAM1. Contributes to natural killer cell cytotoxicity. Involved in leukocyte adhesion and transmigration of leukocytes including T-cells and neutrophils. Triggers neutrophil transmigration during lung injury through PTK2B/PYK2-mediated activation. Integrin ITGAL/ITGB2 in association with ICAM3, contributes to apoptotic neutrophil phagocytosis by macrophages. The protein is Integrin beta-2 (ITGB2) of Bos taurus (Bovine).